Reading from the N-terminus, the 132-residue chain is MDRKMLKSKIHRATVTGADLHYEGSITIDKDLMEAADIIPYEAVCIWDVDNGSRFETYAIEGERGSGVICINGAAARMVAPKDLVIIASFVNMNNEEALKHEPKLVFVDDQNRMLPARKEVAGQGTLKKVAW.

Serine 25 (schiff-base intermediate with substrate; via pyruvic acid) is an active-site residue. At serine 25 the chain carries Pyruvic acid (Ser). A substrate-binding site is contributed by threonine 57. Tyrosine 58 serves as the catalytic Proton donor. A substrate-binding site is contributed by 73–75 (GAA).

Belongs to the PanD family. As to quaternary structure, heterooctamer of four alpha and four beta subunits. Pyruvate is required as a cofactor. Is synthesized initially as an inactive proenzyme, which is activated by self-cleavage at a specific serine bond to produce a beta-subunit with a hydroxyl group at its C-terminus and an alpha-subunit with a pyruvoyl group at its N-terminus.

It is found in the cytoplasm. It carries out the reaction L-aspartate + H(+) = beta-alanine + CO2. The protein operates within cofactor biosynthesis; (R)-pantothenate biosynthesis; beta-alanine from L-aspartate: step 1/1. In terms of biological role, catalyzes the pyruvoyl-dependent decarboxylation of aspartate to produce beta-alanine. The sequence is that of Aspartate 1-decarboxylase from Geotalea uraniireducens (strain Rf4) (Geobacter uraniireducens).